A 609-amino-acid polypeptide reads, in one-letter code: Sodium- and chloride-dependent GABA transporter 2 (609 aa).

The span at 1–13 (MDSRASGTASNGE) shows a compositional bias: polar residues. Residues 1-23 (MDSRASGTASNGETKPVYPVMEK) form a disordered region. Over 1-40 (MDSRASGTASNGETKPVYPVMEKEEEEGTLERGHWNNKME) the chain is Cytoplasmic. The next 3 membrane-spanning stretches (helical) occupy residues 41-61 (FVLSVAGEIIGLGNVWRFPYL), 68-88 (GAFFIPYLVFLFTCGVPVFLL), and 121-141 (IVILLNVYYIIVLAWALFYLF). Residues 142-206 (SSFTIDLPWG…GIQHLGALRW (65 aa)) are Extracellular-facing. A disulfide bridge links cysteine 153 with cysteine 162. 2 N-linked (GlcNAc...) asparagine glycosylation sites follow: asparagine 169 and asparagine 173. Transmembrane regions (helical) follow at residues 207 to 227 (ELALCLLLAWVICYFCIWKGV) and 233 to 253 (VVYFTATFPYLMLVVLLIRGV). Asparagine 269 is a glycosylation site (N-linked (GlcNAc...) asparagine). 7 helical membrane passes run 282–302 (AGTQIFFSFAICLGCLTALGS), 319–339 (FLNSGTSFVAGFAIFSILGFM), 366–386 (VVMLPFSPLWACCFFFMVVLL), 418–438 (VLILGVSVVSFLVGLVMLTEG), 453–473 (GMCLLFVAIFESLCVAWVYGA), 490–510 (PLIKYCWLFLTPAVCTATFLF), and 528–548 (WWGDALGWLLALSSMVCIPAW). Residues 549 to 609 (SLYRLGTLKG…LRLTELESHC (61 aa)) are Cytoplasmic-facing. Position 594 is a phosphothreonine (threonine 594). At serine 598 the chain carries Phosphoserine.

Belongs to the sodium:neurotransmitter symporter (SNF) (TC 2.A.22) family. SLC6A13 subfamily.

It is found in the cell membrane. The protein resides in the basolateral cell membrane. The enzyme catalyses 4-aminobutanoate(out) + chloride(out) + 2 Na(+)(out) = 4-aminobutanoate(in) + chloride(in) + 2 Na(+)(in). It carries out the reaction taurine(out) + chloride(out) + 2 Na(+)(out) = taurine(in) + chloride(in) + 2 Na(+)(in). It catalyses the reaction beta-alanine(out) + chloride(out) + 2 Na(+)(out) = beta-alanine(in) + chloride(in) + 2 Na(+)(in). The catalysed reaction is hypotaurine(out) + chloride(out) + 2 Na(+)(out) = hypotaurine(in) + chloride(in) + 2 Na(+)(in). Functionally, mediates sodium- and chloride-dependent transport of gamma-aminobutyric acid (GABA). Can also mediate transport of beta-alanine, taurine and hypotaurine. The polypeptide is Sodium- and chloride-dependent GABA transporter 2 (SLC6A13) (Macaca fascicularis (Crab-eating macaque)).